The primary structure comprises 65 residues: MVDFPDIEVESIPEEIMEEVGEYIDIFIQLTEIAEMERDVIVEEQLKDEAKQFEEYEDFWFDVYT.

This is an uncharacterized protein from Thermoproteus tenax (TTV1).